Consider the following 318-residue polypeptide: Acetyl-coenzyme A carboxylase carboxyl transferase subunit alpha (318 aa).

The region spanning 39 to 292 (LTDKSEKQLR…GDSIAAELPD (254 aa)) is the CoA carboxyltransferase C-terminal domain.

This sequence belongs to the AccA family. In terms of assembly, acetyl-CoA carboxylase is a heterohexamer composed of biotin carboxyl carrier protein (AccB), biotin carboxylase (AccC) and two subunits each of ACCase subunit alpha (AccA) and ACCase subunit beta (AccD).

It is found in the cytoplasm. It carries out the reaction N(6)-carboxybiotinyl-L-lysyl-[protein] + acetyl-CoA = N(6)-biotinyl-L-lysyl-[protein] + malonyl-CoA. Its pathway is lipid metabolism; malonyl-CoA biosynthesis; malonyl-CoA from acetyl-CoA: step 1/1. Functionally, component of the acetyl coenzyme A carboxylase (ACC) complex. First, biotin carboxylase catalyzes the carboxylation of biotin on its carrier protein (BCCP) and then the CO(2) group is transferred by the carboxyltransferase to acetyl-CoA to form malonyl-CoA. This chain is Acetyl-coenzyme A carboxylase carboxyl transferase subunit alpha, found in Gluconacetobacter diazotrophicus (strain ATCC 49037 / DSM 5601 / CCUG 37298 / CIP 103539 / LMG 7603 / PAl5).